The chain runs to 652 residues: Leucine aminopeptidase 2 (652 aa).

Residues 165–167 and 293–298 contribute to the a peptide site; these read QLE and PYGGME. H322 provides a ligand contact to Zn(2+). The active-site Proton acceptor is E323. H326 and E345 together coordinate Zn(2+). Residue Y411 is the Proton donor of the active site.

It belongs to the peptidase M1 family. The cofactor is Zn(2+).

It localises to the cytoplasm. Its subcellular location is the nucleus. It carries out the reaction an epoxide + H2O = an ethanediol. Aminopeptidase that preferentially cleaves di- and tripeptides. Also has low epoxide hydrolase activity (in vitro). Can hydrolyze the epoxide leukotriene LTA(4) but it forms preferentially 5,6-dihydroxy-7,9,11,14-eicosatetraenoic acid rather than the cytokine leukotriene B(4) as the product compared to the homologous mammalian enzyme (in vitro). This Candida glabrata (strain ATCC 2001 / BCRC 20586 / JCM 3761 / NBRC 0622 / NRRL Y-65 / CBS 138) (Yeast) protein is Leucine aminopeptidase 2.